The chain runs to 445 residues: uncharacterized protein (445 aa).

Histidine 66 provides a ligand contact to Zn(2+). Catalysis depends on glutamate 69, which acts as the Proton acceptor. Zn(2+) is bound by residues histidine 70 and glutamate 146. A disordered region spans residues 232–251; the sequence is GRQSAPPRKSTGRINGGPAL.

The protein belongs to the peptidase M16 family. Zn(2+) serves as cofactor.

This is an uncharacterized protein from Mycobacterium leprae (strain TN).